We begin with the raw amino-acid sequence, 824 residues long: Leucine--tRNA ligase (824 aa).

The 'HIGH' region signature appears at 40 to 50 (PYPSGKIHMGH). The 'KMSKS' region motif lies at 580 to 584 (KMSKS). Lys-583 provides a ligand contact to ATP.

This sequence belongs to the class-I aminoacyl-tRNA synthetase family.

It is found in the cytoplasm. The enzyme catalyses tRNA(Leu) + L-leucine + ATP = L-leucyl-tRNA(Leu) + AMP + diphosphate. The polypeptide is Leucine--tRNA ligase (Alkaliphilus metalliredigens (strain QYMF)).